The sequence spans 136 residues: Histone H3.3-like type 2 (136 aa).

Residues Met-1–Ala-20 form a disordered region. N6-acetyllysine; alternate is present on residues Lys-5 and Lys-10. N6-methylated lysine; alternate occurs at positions 5 and 10. At Ser-11 the chain carries Phosphoserine. Residues Lys-15 and Lys-24 each carry the N6-acetyllysine modification. Residue Lys-28 is modified to N6-methylated lysine. Ser-29 carries the post-translational modification Phosphoserine. An N6-methylated lysine mark is found at Lys-37 and Lys-80.

Belongs to the histone H3 family. As to quaternary structure, the nucleosome is a histone octamer containing two molecules each of H2A, H2B, H3 and H4 assembled in one H3-H4 heterotetramer and two H2A-H2B heterodimers. The octamer wraps approximately 147 bp of DNA. Acetylation is generally linked to gene activation. In terms of processing, methylation at Lys-5 is linked to gene activation. Methylation at Lys-10 is linked to gene repression.

It localises to the nucleus. The protein resides in the chromosome. In terms of biological role, putative variant histone H3 which may replace conventional H3 in a subset of nucleosomes. Nucleosomes wrap and compact DNA into chromatin, limiting DNA accessibility to the cellular machineries which require DNA as a template. Histones thereby play a central role in transcription regulation, DNA repair, DNA replication and chromosomal stability. DNA accessibility is regulated via a complex set of post-translational modifications of histones, also called histone code, and nucleosome remodeling. The chain is Histone H3.3-like type 2 (his-74) from Caenorhabditis elegans.